We begin with the raw amino-acid sequence, 393 residues long: 4-hydroxyphenylpyruvate dioxygenase (393 aa).

N-acetylthreonine is present on Thr2. VOC domains follow at residues His18 to Lys149 and Met180 to Lys338. N6-succinyllysine is present on Lys132. Fe cation is bound at residue His183. Ser211, Ser226, and Ser250 each carry phosphoserine. Fe cation-binding residues include His266 and Glu349.

This sequence belongs to the 4HPPD family. As to quaternary structure, homodimer. Fe cation is required as a cofactor.

The protein localises to the cytoplasm. The protein resides in the endoplasmic reticulum membrane. It is found in the golgi apparatus membrane. The catalysed reaction is 3-(4-hydroxyphenyl)pyruvate + O2 = homogentisate + CO2. It functions in the pathway amino-acid degradation; L-phenylalanine degradation; acetoacetate and fumarate from L-phenylalanine: step 3/6. In terms of biological role, catalyzes the conversion of 4-hydroxyphenylpyruvic acid to homogentisic acid, one of the steps in tyrosine catabolism. This chain is 4-hydroxyphenylpyruvate dioxygenase (HPD), found in Homo sapiens (Human).